Reading from the N-terminus, the 410-residue chain is Arginine biosynthesis bifunctional protein ArgJ (410 aa).

Residues T158, K184, T195, E282, N405, and S410 each coordinate substrate. Catalysis depends on T195, which acts as the Nucleophile.

Belongs to the ArgJ family. In terms of assembly, heterotetramer of two alpha and two beta chains.

It is found in the cytoplasm. The enzyme catalyses N(2)-acetyl-L-ornithine + L-glutamate = N-acetyl-L-glutamate + L-ornithine. It carries out the reaction L-glutamate + acetyl-CoA = N-acetyl-L-glutamate + CoA + H(+). It participates in amino-acid biosynthesis; L-arginine biosynthesis; L-ornithine and N-acetyl-L-glutamate from L-glutamate and N(2)-acetyl-L-ornithine (cyclic): step 1/1. It functions in the pathway amino-acid biosynthesis; L-arginine biosynthesis; N(2)-acetyl-L-ornithine from L-glutamate: step 1/4. Functionally, catalyzes two activities which are involved in the cyclic version of arginine biosynthesis: the synthesis of N-acetylglutamate from glutamate and acetyl-CoA as the acetyl donor, and of ornithine by transacetylation between N(2)-acetylornithine and glutamate. The polypeptide is Arginine biosynthesis bifunctional protein ArgJ (Bartonella henselae (strain ATCC 49882 / DSM 28221 / CCUG 30454 / Houston 1) (Rochalimaea henselae)).